A 179-amino-acid chain; its full sequence is Phosphopantetheine adenylyltransferase (179 aa).

S23 lines the substrate pocket. Residues 23–24 (SF) and H31 each bind ATP. K55, A87, and R101 together coordinate substrate. ATP is bound by residues 102–104 (GIR), E112, and 137–143 (FAHVSSS).

This sequence belongs to the bacterial CoaD family. In terms of assembly, homohexamer. Mg(2+) is required as a cofactor.

It localises to the cytoplasm. It carries out the reaction (R)-4'-phosphopantetheine + ATP + H(+) = 3'-dephospho-CoA + diphosphate. It functions in the pathway cofactor biosynthesis; coenzyme A biosynthesis; CoA from (R)-pantothenate: step 4/5. Its function is as follows. Reversibly transfers an adenylyl group from ATP to 4'-phosphopantetheine, yielding dephospho-CoA (dPCoA) and pyrophosphate. In Rhodopirellula baltica (strain DSM 10527 / NCIMB 13988 / SH1), this protein is Phosphopantetheine adenylyltransferase.